The chain runs to 502 residues: Acetyl-coenzyme A carboxylase carboxyl transferase subunit beta, chloroplastic (502 aa).

Low complexity predominate over residues 191-202 (GSDSESSSIRTS). Residues 191–212 (GSDSESSSIRTSGNDSNFNVRE) form a disordered region. The CoA carboxyltransferase N-terminal domain occupies 226 to 497 (LWVQCENCYE…NQNSSGARGS (272 aa)). Cys230, Cys233, Cys249, and Cys252 together coordinate Zn(2+). Residues 230–252 (CENCYELNYRSFFRSKMNICEQC) form a C4-type zinc finger.

This sequence belongs to the AccD/PCCB family. In terms of assembly, acetyl-CoA carboxylase is a heterohexamer composed of biotin carboxyl carrier protein, biotin carboxylase and 2 subunits each of ACCase subunit alpha and ACCase plastid-coded subunit beta (accD). It depends on Zn(2+) as a cofactor.

The protein localises to the plastid. Its subcellular location is the chloroplast stroma. The enzyme catalyses N(6)-carboxybiotinyl-L-lysyl-[protein] + acetyl-CoA = N(6)-biotinyl-L-lysyl-[protein] + malonyl-CoA. The protein operates within lipid metabolism; malonyl-CoA biosynthesis; malonyl-CoA from acetyl-CoA: step 1/1. In terms of biological role, component of the acetyl coenzyme A carboxylase (ACC) complex. Biotin carboxylase (BC) catalyzes the carboxylation of biotin on its carrier protein (BCCP) and then the CO(2) group is transferred by the transcarboxylase to acetyl-CoA to form malonyl-CoA. The sequence is that of Acetyl-coenzyme A carboxylase carboxyl transferase subunit beta, chloroplastic from Chloranthus spicatus (Chulantree).